We begin with the raw amino-acid sequence, 256 residues long: Thiazole synthase (256 aa).

Lysine 95 acts as the Schiff-base intermediate with DXP in catalysis. Residues glycine 156, 182-183, and 204-205 contribute to the 1-deoxy-D-xylulose 5-phosphate site; these read AG and NT.

Belongs to the ThiG family. As to quaternary structure, homotetramer. Forms heterodimers with either ThiH or ThiS.

It is found in the cytoplasm. It carries out the reaction [ThiS sulfur-carrier protein]-C-terminal-Gly-aminoethanethioate + 2-iminoacetate + 1-deoxy-D-xylulose 5-phosphate = [ThiS sulfur-carrier protein]-C-terminal Gly-Gly + 2-[(2R,5Z)-2-carboxy-4-methylthiazol-5(2H)-ylidene]ethyl phosphate + 2 H2O + H(+). It participates in cofactor biosynthesis; thiamine diphosphate biosynthesis. In terms of biological role, catalyzes the rearrangement of 1-deoxy-D-xylulose 5-phosphate (DXP) to produce the thiazole phosphate moiety of thiamine. Sulfur is provided by the thiocarboxylate moiety of the carrier protein ThiS. In vitro, sulfur can be provided by H(2)S. The sequence is that of Thiazole synthase from Cronobacter sakazakii (strain ATCC BAA-894) (Enterobacter sakazakii).